A 463-amino-acid chain; its full sequence is DNA repair exonuclease REC1 (463 aa).

Disordered regions lie at residues 81 to 128 (RGST…HTKK) and 172 to 203 (PSRP…GYQR). The span at 90–100 (SRPKKRSKLTS) shows a compositional bias: basic residues.

This sequence belongs to the rad1 family.

The protein localises to the nucleus. The catalysed reaction is Exonucleolytic cleavage in the 3'- to 5'-direction to yield nucleoside 5'-phosphates.. Plays a central role in regulating the genetic system of this fungus. Has a 3'--&gt;5' exonuclease activity. The protein is DNA repair exonuclease REC1 (REC1) of Mycosarcoma maydis (Corn smut fungus).